A 1094-amino-acid polypeptide reads, in one-letter code: DNA polymerase delta catalytic subunit (1094 aa).

Zn(2+) contacts are provided by C1003, C1006, C1016, and C1019. Residues 1003-1019 form a CysA-type zinc finger; that stretch reads CIGCNSSIKKPPLCNHC. The [4Fe-4S] cluster site is built by C1049, C1052, C1062, and C1067. The CysB motif signature appears at 1049-1067; the sequence is CQRCQGNLHVDVICMNRDC.

Belongs to the DNA polymerase type-B family. Heterodimer composed of a catalytic subunit POLD and a small regulatory subunit. The cofactor is [4Fe-4S] cluster. Requires Mg(2+) as cofactor.

It localises to the nucleus. It catalyses the reaction DNA(n) + a 2'-deoxyribonucleoside 5'-triphosphate = DNA(n+1) + diphosphate. The small regulatory subunit delta and PCNA1 increase POLD catalytic activity. In terms of biological role, this polymerase possesses two enzymatic activities: DNA synthesis (polymerase) and an exonucleolytic activity that degrades single-stranded DNA in the 3'- to 5'-direction. The protein is DNA polymerase delta catalytic subunit (POLD) of Plasmodium falciparum (isolate K1 / Thailand).